Here is a 573-residue protein sequence, read N- to C-terminus: Oxygen sensor histidine kinase response regulator DosT (573 aa).

GAF domains follow at residues 61–198 (KLDA…GIAV) and 229–366 (DPAM…ALAW). Position 147 (His-147) interacts with heme. The Histidine kinase domain maps to 380–573 (ILTDRDRIAR…TLLRWSAPLR (194 aa)). His-392 carries the phosphohistidine; by autocatalysis modification.

Requires Mg(2+) as cofactor. The cofactor is heme.

The protein localises to the cytoplasm. Interacts with the two-component regulatory system DevR/DevS (DosR/DosS) involved in onset of the dormancy response. Required for full induction of the DevR (DosR) regulon; required during early adaptation to anaerobiosis, to start induction of the DevR regulon. May act as a direct hypoxia/oxygen sensor. May be the secondary sensor for CO. Donates a phosphate group to DevR (DosR). In Mycobacterium tuberculosis (strain CDC 1551 / Oshkosh), this protein is Oxygen sensor histidine kinase response regulator DosT (dosT).